We begin with the raw amino-acid sequence, 178 residues long: Bifunctional protein PyrR (178 aa).

Residues 41 to 42 (RR), 103 to 111 (DDVLYTGRT), and R136 each bind substrate. Positions 99–111 (VILVDDVLYTGRT) match the PRPP-binding motif.

Belongs to the purine/pyrimidine phosphoribosyltransferase family. PyrR subfamily. As to quaternary structure, homodimer and homohexamer; in equilibrium.

The enzyme catalyses UMP + diphosphate = 5-phospho-alpha-D-ribose 1-diphosphate + uracil. In terms of biological role, regulates transcriptional attenuation of the pyrimidine nucleotide (pyr) operon by binding in a uridine-dependent manner to specific sites on pyr mRNA. This disrupts an antiterminator hairpin in the RNA and favors formation of a downstream transcription terminator, leading to a reduced expression of downstream genes. Functionally, also displays a weak uracil phosphoribosyltransferase activity which is not physiologically significant. In Clostridium acetobutylicum (strain ATCC 824 / DSM 792 / JCM 1419 / IAM 19013 / LMG 5710 / NBRC 13948 / NRRL B-527 / VKM B-1787 / 2291 / W), this protein is Bifunctional protein PyrR.